The following is a 57-amino-acid chain: Large ribosomal subunit protein eL20 (57 aa).

This sequence belongs to the eukaryotic ribosomal protein eL20 family. Part of the 50S ribosomal subunit. Binds 23S rRNA.

This is Large ribosomal subunit protein eL20 from Archaeoglobus fulgidus (strain ATCC 49558 / DSM 4304 / JCM 9628 / NBRC 100126 / VC-16).